The following is a 415-amino-acid chain: Corticotropin-releasing factor receptor 1 (415 aa).

A signal peptide spans M1–T24. Residues S25–K111 are Extracellular-facing. 3 disulfide bridges follow: C30–C54, C44–C87, and C68–C102. N-linked (GlcNAc...) asparagine glycans are attached at residues N38, N45, N78, and N90. The helical transmembrane segment at T112–L142 threads the bilayer. Topologically, residues R143 to C149 are cytoplasmic. A helical membrane pass occupies residues L150–L174. The Extracellular segment spans residues T175–R189. C188 and C258 are joined by a disulfide. Residues L190–V218 traverse the membrane as a helical segment. Topologically, residues L219–K225 are cytoplasmic. A helical transmembrane segment spans residues L226–Y253. Over D254–D269 the chain is Extracellular. Residues F270 to M295 form a helical membrane-spanning segment. At T296–T306 the chain is on the cytoplasmic side. Residues I307–F331 traverse the membrane as a helical segment. At V332 to E338 the chain is on the extracellular side. Residues I339–S368 form a helical membrane-spanning segment. Residues E369 to I415 are Cytoplasmic-facing.

It belongs to the G-protein coupled receptor 2 family. Interacts (via N-terminal extracellular domain) with CRF and UCN.

Its subcellular location is the cell membrane. G-protein coupled receptor for CRH (corticotropin-releasing factor) and UCN (urocortin). Has high affinity for CRH and UCN. Ligand binding causes a conformation change that triggers signaling via guanine nucleotide-binding proteins (G proteins) and down-stream effectors, such as adenylate cyclase. Promotes the activation of adenylate cyclase, leading to increased intracellular cAMP levels. The polypeptide is Corticotropin-releasing factor receptor 1 (crhr1) (Xenopus laevis (African clawed frog)).